Here is a 128-residue protein sequence, read N- to C-terminus: Large ribosomal subunit protein uL22 (128 aa).

It belongs to the universal ribosomal protein uL22 family. As to quaternary structure, part of the 50S ribosomal subunit.

Functionally, this protein binds specifically to 23S rRNA; its binding is stimulated by other ribosomal proteins, e.g. L4, L17, and L20. It is important during the early stages of 50S assembly. It makes multiple contacts with different domains of the 23S rRNA in the assembled 50S subunit and ribosome. The globular domain of the protein is located near the polypeptide exit tunnel on the outside of the subunit, while an extended beta-hairpin is found that lines the wall of the exit tunnel in the center of the 70S ribosome. The polypeptide is Large ribosomal subunit protein uL22 (Rhodopseudomonas palustris (strain HaA2)).